Reading from the N-terminus, the 327-residue chain is Homeotic protein distal-less (327 aa).

The homeobox DNA-binding region spans 124–183; that stretch reads MRKPRTIYSSLQLQQLNRRFQRTQYLALPERAELAASLGLTQTQVKIWFQNRRSKYKKMM. The segment at 181–303 is disordered; it reads KMMKAAQGPG…THHHNPPPQM (123 aa). Residues 231–249 are compositionally biased toward low complexity; that stretch reads LPPGHSPTPSSTPVSELSP. Positions 266–275 are enriched in basic and acidic residues; sequence QKPHWIDHKP. Positions 276–286 are enriched in pro residues; the sequence is PPQMTPQPPHP.

Expressed in the embryo in limb primordia of the head and thoracic segments. Expressed in regions of the larval leg, wing, antennal and haltere disks that form the distal-most regions of the mature structures (in the leg this corresponds to the tarsus and the distal tibia). Found in the optic center of the developing larval brain.

Its subcellular location is the nucleus. Transcription factor that plays a role in larval and adult appendage development. Specifies the identity of ventral appendages (including legs and antennae) and suppresses dorsal appendage development. Involved in patterning the distal-proximal limb axis. May control the adhesive properties of cells during limb morphogenesis. Also has a secondary role in the normal patterning of the wing margin. This chain is Homeotic protein distal-less (Dll), found in Drosophila melanogaster (Fruit fly).